Consider the following 2303-residue polypeptide: Genome polyprotein (2303 aa).

A zinc finger lies at 3-14; it reads CKHGYPDVCPIC. The acidic stretch occupies residues 30–46; that stretch reads DGEWFPTDLLCVDLDDD. Positions 60–73 are theilo; that stretch reads MEWTDVPLVCDTVM. The tract at residues 73 to 93 is disordered; that stretch reads MEPQGNASSSDKSNSQSSGNE. A lipid anchor (N-myristoyl glycine; by host) is attached at Gly77. Low complexity predominate over residues 80 to 90; that stretch reads SSSDKSNSQSS. The cysteines at positions 501 and 503 are disulfide-linked. The host EIF4E binding stretch occupies residues 1041–1047; that stretch reads YYKQRLI. Residues 1283–1448 form the SF3 helicase domain; sequence IPLASLCEKF…CKTPAGMLDI (166 aa). 1312–1319 provides a ligand contact to ATP; the sequence is GAAGQGKS. Tyr1608 carries the O-(5'-phospho-RNA)-tyrosine modification. The region spanning 1636–1829 is the Peptidase C3 domain; it reads NPVMDFELFC…AATIITRELI (194 aa). Catalysis depends on for protease 3C activity residues His1680, Asp1714, and Cys1793. The RdRp catalytic domain maps to 2071–2189; the sequence is NYVYDVDYSN…GTNYQIDFNL (119 aa). Residues Asp2077 and Asp2175 each act as for RdRp activity in the active site.

The protein belongs to the picornaviruses polyprotein family. Interacts with host EIF4E. Interacts with the leader protein. In terms of assembly, interacts with host RAN; the complex L-RAN recruits cellular kinases responsible for the L-induced nucleocytoplasmic trafficking inhibition. The complex L-RAN can further bind to the host exportins XPO1/CRM1 and CSE1L/CAS. Interacts with the protein 2A. Interacts with host RNASEL; this interaction prevents RNASEL activation by its substrate 2'-5' oligoadenylates. Phosphorylated. In terms of processing, specific enzymatic cleavages by the viral protease in vivo yield a variety of precursors and mature proteins. The polyprotein seems to be cotranslationally cleaved at the 2A/2B junction by a ribosomal skip from one codon to the next without formation of a peptide bond. This process would release the P1-2A peptide from the translational complex. Post-translationally, during virion maturation, immature virions are rendered infectious following cleavage of VP0 into VP4 and VP2. This maturation seems to be an autocatalytic event triggered by the presence of RNA in the capsid and is followed by a conformational change of the particle. Uridylylated by the polymerase and is covalently linked to the 5'-end of genomic RNA. This uridylylated form acts as a nucleotide-peptide primer for the polymerase. In terms of processing, myristoylation is required during RNA encapsidation and formation of the mature virus particle.

Its subcellular location is the virion. The protein resides in the host cytoplasm. It localises to the host nucleus. The protein localises to the host nucleolus. It is found in the host cytoplasmic vesicle membrane. The catalysed reaction is RNA(n) + a ribonucleoside 5'-triphosphate = RNA(n+1) + diphosphate. The enzyme catalyses ATP + H2O = ADP + phosphate + H(+). It catalyses the reaction Selective cleavage of Gln-|-Gly bond in the poliovirus polyprotein. In other picornavirus reactions Glu may be substituted for Gln, and Ser or Thr for Gly.. In terms of biological role, forms a complex with host RAN and probably binds to exportins carrying activated MAPK in order to mediate the hyperphosphorylation of host Phe/Gly containing nuclear pore proteins (Nups) resulting in cessation of active nucleocytoplasmic transport. Proteins with NLS signals fail to import, cellular mRNAs fail to export, and some proteins small enough for diffusion are not retained anymore (efflux). The resulting inhibition of cellular protein synthesis serves to ensure maximal viral gene expression and to evade host immune response. The leader protein also inhibits host interferon regulatory factor 3 (IRF3) dimerization, thereby blocking the transcriptional activation of IFN genes. Binds to host RNase L thereby preventing its activation by 2'-5' oligoadenylates in order to counteract the antiviral interferon-inducible OAS/RNase L pathway. Inhibits the integrated stress response (ISR) in the infected cell. Inhibits the host EIF2AK2/PKR by rendering this kinase unable to detect double-stranded RNA. Also impairs host stress granule formation probably by acting on a step downstream of EIF2AK2/PKR activation. Forms an icosahedral capsid of pseudo T=3 symmetry with capsid proteins VP2 and VP3. Together they form an icosahedral capsid composed of 60 copies of each VP1, VP2, and VP3, with a diameter of approximately 300 Angstroms. VP4 lies on the inner surface of the protein shell formed by VP1, VP2 and VP3. All the three latter proteins contain a beta-sheet structure called beta-barrel jelly roll. VP1 is situated at the 12 fivefold axes, whereas VP2 and VP3 are located at the quasi-sixfold axes. Its function is as follows. Lies on the inner surface of the capsid shell. After binding to the host receptor, the capsid undergoes conformational changes. Capsid protein VP4 is released, capsid protein VP1 N-terminus is externalized, and together, they shape a pore in the host membrane through which the viral genome is translocated into the host cell cytoplasm. After genome has been released, the channel shrinks. Functionally, VP0 precursor is a component of immature procapsids. In terms of biological role, involved in host translation shutoff by inhibiting cap-dependent mRNA translation. Nuclear localization is required for this function. The resulting inhibition of cellular protein synthesis serves to ensure maximal viral gene expression and to evade host immune response. Inhibits the phosphorylation of the leader protein. Binds to the RNA stem-loop essential for the ribosomal frameshift event and trans-activates the production of protein 2B*. Affects membrane integrity and causes an increase in membrane permeability. Its function is as follows. Associates with and induces structural rearrangements of intracellular membranes. It displays RNA-binding, nucleotide binding and NTPase activities. Functionally, serves as membrane anchor via its hydrophobic domain. In terms of biological role, forms a primer, VPg-pU, which is utilized by the polymerase for the initiation of RNA chains. Cysteine protease that generates mature viral proteins from the precursor polyprotein. In addition to its proteolytic activity, it binds to viral RNA, and thus influences viral genome replication. RNA and substrate cooperatively bind to the protease. Cleaves host PABP1, this cleavage is important for viral replication. Its function is as follows. Replicates the genomic and antigenomic RNAs by recognizing replications specific signals. Performs VPg uridylylation. In Mus musculus (Mouse), this protein is Genome polyprotein.